We begin with the raw amino-acid sequence, 189 residues long: NADH-quinone oxidoreductase subunit B (189 aa).

Residues Cys39, Cys40, Cys104, and Cys135 each coordinate [4Fe-4S] cluster.

This sequence belongs to the complex I 20 kDa subunit family. NDH-1 is composed of 14 different subunits. Subunits NuoB, C, D, E, F, and G constitute the peripheral sector of the complex. [4Fe-4S] cluster serves as cofactor.

The protein localises to the cell inner membrane. It catalyses the reaction a quinone + NADH + 5 H(+)(in) = a quinol + NAD(+) + 4 H(+)(out). Its function is as follows. NDH-1 shuttles electrons from NADH, via FMN and iron-sulfur (Fe-S) centers, to quinones in the respiratory chain. The immediate electron acceptor for the enzyme in this species is believed to be a menaquinone. Couples the redox reaction to proton translocation (for every two electrons transferred, four hydrogen ions are translocated across the cytoplasmic membrane), and thus conserves the redox energy in a proton gradient. The chain is NADH-quinone oxidoreductase subunit B from Chlorobium phaeobacteroides (strain DSM 266 / SMG 266 / 2430).